Here is a 230-residue protein sequence, read N- to C-terminus: uncharacterized protein (230 aa).

The HTH gntR-type domain occupies 12–80 (KNLSYVLAEK…PRIGTRVMPQ (69 aa)). Positions 40–59 (EIELGEQFGVSRTAVREAVK) form a DNA-binding region, H-T-H motif.

This is an uncharacterized protein from Escherichia coli (strain K12).